A 301-amino-acid chain; its full sequence is tRNA pseudouridine synthase B (301 aa).

The active-site Nucleophile is the aspartate 48.

It belongs to the pseudouridine synthase TruB family. Type 1 subfamily.

It carries out the reaction uridine(55) in tRNA = pseudouridine(55) in tRNA. In terms of biological role, responsible for synthesis of pseudouridine from uracil-55 in the psi GC loop of transfer RNAs. The protein is tRNA pseudouridine synthase B of Mycobacterium ulcerans (strain Agy99).